A 257-amino-acid polypeptide reads, in one-letter code: Ribonuclease PH (257 aa).

Residues R86 and 124-126 (GTR) each bind phosphate.

The protein belongs to the RNase PH family. As to quaternary structure, homohexameric ring arranged as a trimer of dimers.

It catalyses the reaction tRNA(n+1) + phosphate = tRNA(n) + a ribonucleoside 5'-diphosphate. Functionally, phosphorolytic 3'-5' exoribonuclease that plays an important role in tRNA 3'-end maturation. Removes nucleotide residues following the 3'-CCA terminus of tRNAs; can also add nucleotides to the ends of RNA molecules by using nucleoside diphosphates as substrates, but this may not be physiologically important. Probably plays a role in initiation of 16S rRNA degradation (leading to ribosome degradation) during starvation. In Sulfurihydrogenibium sp. (strain YO3AOP1), this protein is Ribonuclease PH.